The primary structure comprises 308 residues: Ribosomal RNA large subunit methyltransferase F (308 aa).

It belongs to the methyltransferase superfamily. METTL16/RlmF family.

Its subcellular location is the cytoplasm. It carries out the reaction adenosine(1618) in 23S rRNA + S-adenosyl-L-methionine = N(6)-methyladenosine(1618) in 23S rRNA + S-adenosyl-L-homocysteine + H(+). Specifically methylates the adenine in position 1618 of 23S rRNA. This is Ribosomal RNA large subunit methyltransferase F from Salmonella dublin (strain CT_02021853).